The sequence spans 638 residues: DNA gyrase subunit B (638 aa).

The 115-residue stretch at 423–537 (CEVYIVEGDS…KGHVYLAMPP (115 aa)) folds into the Toprim domain. Mg(2+) contacts are provided by Glu-429, Asp-502, and Asp-504.

Belongs to the type II topoisomerase GyrB family. In terms of assembly, heterotetramer, composed of two GyrA and two GyrB chains. In the heterotetramer, GyrA contains the active site tyrosine that forms a transient covalent intermediate with DNA, while GyrB binds cofactors and catalyzes ATP hydrolysis. The cofactor is Mg(2+). Mn(2+) is required as a cofactor. Ca(2+) serves as cofactor.

It is found in the cytoplasm. It catalyses the reaction ATP-dependent breakage, passage and rejoining of double-stranded DNA.. A type II topoisomerase that negatively supercoils closed circular double-stranded (ds) DNA in an ATP-dependent manner to modulate DNA topology and maintain chromosomes in an underwound state. Negative supercoiling favors strand separation, and DNA replication, transcription, recombination and repair, all of which involve strand separation. Also able to catalyze the interconversion of other topological isomers of dsDNA rings, including catenanes and knotted rings. Type II topoisomerases break and join 2 DNA strands simultaneously in an ATP-dependent manner. The chain is DNA gyrase subunit B from Treponema denticola (strain ATCC 35405 / DSM 14222 / CIP 103919 / JCM 8153 / KCTC 15104).